We begin with the raw amino-acid sequence, 306 residues long: UDP-N-acetylenolpyruvoylglucosamine reductase (306 aa).

One can recognise an FAD-binding PCMH-type domain in the interval 34 to 198 (VGGPADLLIT…LEVTFKLHNS (165 aa)). Residue Arg177 is part of the active site. Catalysis depends on Ser227, which acts as the Proton donor. Residue Glu297 is part of the active site.

The protein belongs to the MurB family. Requires FAD as cofactor.

The protein resides in the cytoplasm. The catalysed reaction is UDP-N-acetyl-alpha-D-muramate + NADP(+) = UDP-N-acetyl-3-O-(1-carboxyvinyl)-alpha-D-glucosamine + NADPH + H(+). It participates in cell wall biogenesis; peptidoglycan biosynthesis. Cell wall formation. The polypeptide is UDP-N-acetylenolpyruvoylglucosamine reductase (Clostridium botulinum (strain 657 / Type Ba4)).